We begin with the raw amino-acid sequence, 193 residues long: dTTP/UTP pyrophosphatase (193 aa).

Catalysis depends on aspartate 70, which acts as the Proton acceptor.

It belongs to the Maf family. YhdE subfamily. Requires a divalent metal cation as cofactor.

It is found in the cytoplasm. It catalyses the reaction dTTP + H2O = dTMP + diphosphate + H(+). The enzyme catalyses UTP + H2O = UMP + diphosphate + H(+). Its function is as follows. Nucleoside triphosphate pyrophosphatase that hydrolyzes dTTP and UTP. May have a dual role in cell division arrest and in preventing the incorporation of modified nucleotides into cellular nucleic acids. This Ruminiclostridium cellulolyticum (strain ATCC 35319 / DSM 5812 / JCM 6584 / H10) (Clostridium cellulolyticum) protein is dTTP/UTP pyrophosphatase.